Reading from the N-terminus, the 310-residue chain is Putative methyltransferase mtx subunit H (310 aa).

Belongs to the MtrH family. May be part of a complex composed of 3 subunits; MtxA, MtxH and MtxX.

The protein is Putative methyltransferase mtx subunit H (mtxH) of Methanosarcina mazei (strain ATCC BAA-159 / DSM 3647 / Goe1 / Go1 / JCM 11833 / OCM 88) (Methanosarcina frisia).